Here is a 992-residue protein sequence, read N- to C-terminus: Ribosome quality control complex subunit NEMF homolog (992 aa).

Residues 214-231 (KETTEETPEAEDKPEKGG) show a composition bias toward basic and acidic residues. The tract at residues 214–245 (KETTEETPEAEDKPEKGGKKQRKKQQNTKLEQ) is disordered. Coiled coils occupy residues 331–370 (STQESQKIDMKTLQQEREALKKLSNVKNDHAKRLEELTKV) and 481–514 (SAAQKEKKTVDASQKALKSAERKTQQTLKEVRTI). Disordered regions lie at residues 688-715 (EVEHDLLSDNEDADSNINLSEPSSNTEI) and 771-895 (GPSR…GDVD). Positions 702 to 715 (SNINLSEPSSNTEI) are enriched in polar residues. The stretch at 774 to 839 (RKKQVSAKKT…QDDEEREIRM (66 aa)) forms a coiled coil. The span at 782 to 796 (KTKEDKARAKQEAAK) shows a compositional bias: basic and acidic residues. A compositionally biased stretch (basic residues) spans 814–825 (RGQKGKLKKMKQ). Basic and acidic residues predominate over residues 845 to 874 (SGKEKPQASADKVVEKSESTKEYVKPEKSA).

It belongs to the NEMF family. Component of the ribosome quality control complex (RQC), composed of at least the E3 ubiquitin ligase l(3)76BDr/LTN1 and Clbn/NEMF associated with the 60S ribosomal subunit. The complex probably also contains TCF25 as well as TER94/VCP and its ubiquitin-binding cofactors. Interacts (via its C-terminus) with pros (via its homeobox). Interacts (via its N-terminus) with emb. As to expression, expressed in enterocytes (at protein level).

It localises to the nucleus. It is found in the cytoplasm. Its subcellular location is the mitochondrion outer membrane. Functionally, key component of the ribosome quality control complex (RQC), a ribosome-associated complex that mediates the extraction of incompletely synthesized nascent chains from stalled ribosomes as well as their ubiquitin-mediated proteasomal degradation. Thereby, frees 60S subunit ribosomes from the stalled translation complex and prevents the accumulation of nascent polypeptide chains that are potentially toxic for the cell. Within the RQC complex, Clbn/NEMF specifically binds stalled 60S ribosomal subunits by recognizing an exposed, nascent chain-conjugated tRNA moiety. Following binding to stalled 60S ribosomal subunits, Clbn/NEMF mediates CAT tailing by recruiting alanine-charged tRNA to the A-site and directing the elongation of stalled nascent chains independently of mRNA or 40S subunits, leading to non-templated C-terminal alanine extensions (CAT tails). On mitochondrial surface, plays a role in mitochondrial-stress induced translational termination impairment and protein carboxyl terminal extension (MISTERMINATE). Plays a role in regulating nuclear transport possibly through directly binding to both emb and cargo proteins. Plays a role in the regulation of G1-to-S cell cycle transition. Regulates S phase checkpoint by antagonizing E2F1 activity. Together with hid and tefu/ATM, plays a role in DNA damage-induced apoptosis through both p53-dependent and -independent activity. Plays an essential role in the regulation of mitochondrial structure and redox state in enterocytes which is essential for the control of intestinal stem cells proliferation and intestinal homeostasis. In Drosophila melanogaster (Fruit fly), this protein is Ribosome quality control complex subunit NEMF homolog.